The following is a 335-amino-acid chain: MGRLNLEHTLQGHKGRIWGVAWHPKGNVFASCGEDKAIRIWSLNGNTWTTKTILSDGHKRTIREIRWSPCGQYLASASFDGTTAIWSKSSGEFECNATLEGHENEVKSVSWSRSGGLLATCSRDKSVWIWEVAGDDEFECAAVLNPHTQDVKRVVWHPTKELLASASYDNTIKMFAEDALDSDWDCVATLSSHTSTVWSIDFDATGERLVSCSDDTSLKIWQAYHPGNDAGVATPDKQTVWKCVCTISGQHSRAIYDVSWCKLTNLIATACGDDGIRIFKETSDSKRDEPTFEQLTAEEGAHDQDVNSVEWNPVVEGQLISCSDDGTIKVWKMTE.

WD repeat units lie at residues 12–51, 57–96, 101–140, 146–185, 192–231, 250–289, and 301–335; these read GHKG…WTTK, GHKR…FECN, GHEN…EFEC, PHTQ…SDWD, SHTS…NDAG, QHSR…KRDE, and AHDQ…KMTE.

Belongs to the WD repeat CIA1 family.

Essential component of the cytosolic iron-sulfur (Fe/S) protein assembly machinery. Required for the maturation of extramitochondrial Fe/S proteins. The protein is Probable cytosolic iron-sulfur protein assembly protein Ciao1 of Drosophila ananassae (Fruit fly).